We begin with the raw amino-acid sequence, 193 residues long: Ion-translocating oxidoreductase complex subunit A (193 aa).

The next 6 membrane-spanning stretches (helical) occupy residues 5 to 25 (FFFI…FLGL), 47 to 67 (FVVV…LLPF), 72 to 92 (LRII…EIIL), 102 to 122 (ILGI…IPLF), 134 to 154 (ILYA…FSSI), and 171 to 191 (PIVL…KGLV).

This sequence belongs to the NqrDE/RnfAE family. As to quaternary structure, the complex is composed of six subunits: RnfA, RnfB, RnfC, RnfD, RnfE and RnfG.

It localises to the cell inner membrane. Its function is as follows. Part of a membrane-bound complex that couples electron transfer with translocation of ions across the membrane. This is Ion-translocating oxidoreductase complex subunit A from Buchnera aphidicola subsp. Schizaphis graminum (strain Sg).